Here is a 202-residue protein sequence, read N- to C-terminus: Holliday junction branch migration complex subunit RuvA (202 aa).

A domain I region spans residues 1–64; that stretch reads MIGRLRGTLA…EDAQLLYGFA (64 aa). A domain II region spans residues 65-143; that stretch reads GKRERDFFRE…AWETSPAMFA (79 aa). The interval 144–154 is flexible linker; the sequence is LVPNQPDGPAP. The interval 154–202 is domain III; sequence PVNTAENDAVSALISLGYKPQEASKAISAIKEKGLSSEDMIRRALKGMI.

Belongs to the RuvA family. In terms of assembly, homotetramer. Forms an RuvA(8)-RuvB(12)-Holliday junction (HJ) complex. HJ DNA is sandwiched between 2 RuvA tetramers; dsDNA enters through RuvA and exits via RuvB. An RuvB hexamer assembles on each DNA strand where it exits the tetramer. Each RuvB hexamer is contacted by two RuvA subunits (via domain III) on 2 adjacent RuvB subunits; this complex drives branch migration. In the full resolvosome a probable DNA-RuvA(4)-RuvB(12)-RuvC(2) complex forms which resolves the HJ.

The protein localises to the cytoplasm. The RuvA-RuvB-RuvC complex processes Holliday junction (HJ) DNA during genetic recombination and DNA repair, while the RuvA-RuvB complex plays an important role in the rescue of blocked DNA replication forks via replication fork reversal (RFR). RuvA specifically binds to HJ cruciform DNA, conferring on it an open structure. The RuvB hexamer acts as an ATP-dependent pump, pulling dsDNA into and through the RuvAB complex. HJ branch migration allows RuvC to scan DNA until it finds its consensus sequence, where it cleaves and resolves the cruciform DNA. The chain is Holliday junction branch migration complex subunit RuvA from Pseudomonas fluorescens (strain Pf0-1).